Reading from the N-terminus, the 385-residue chain is Outer membrane porin protein BP0840 (385 aa).

An N-terminal signal peptide occupies residues 1 to 20; sequence MKKTLLAAALLAGFAGAAQA.

This sequence to bacterial outer membrane proteins and porins. As to quaternary structure, homotrimer.

It localises to the cell outer membrane. Its function is as follows. Forms anion selective channels. This is Outer membrane porin protein BP0840 from Bordetella pertussis (strain Tohama I / ATCC BAA-589 / NCTC 13251).